The chain runs to 196 residues: Pyridoxal 5'-phosphate synthase subunit PdxT (196 aa).

An L-glutamine-binding site is contributed by 47–49; sequence GES. Residue cysteine 79 is the Nucleophile of the active site. L-glutamine is bound by residues arginine 106 and 134-135; that span reads IR. Residues histidine 170 and glutamate 172 each act as charge relay system in the active site.

It belongs to the glutaminase PdxT/SNO family. In the presence of PdxS, forms a dodecamer of heterodimers. Only shows activity in the heterodimer.

It catalyses the reaction aldehydo-D-ribose 5-phosphate + D-glyceraldehyde 3-phosphate + L-glutamine = pyridoxal 5'-phosphate + L-glutamate + phosphate + 3 H2O + H(+). The catalysed reaction is L-glutamine + H2O = L-glutamate + NH4(+). The protein operates within cofactor biosynthesis; pyridoxal 5'-phosphate biosynthesis. In terms of biological role, catalyzes the hydrolysis of glutamine to glutamate and ammonia as part of the biosynthesis of pyridoxal 5'-phosphate. The resulting ammonia molecule is channeled to the active site of PdxS. In Bacillus subtilis (strain 168), this protein is Pyridoxal 5'-phosphate synthase subunit PdxT.